Here is a 254-residue protein sequence, read N- to C-terminus: Nickel import ATP-binding protein NikO (254 aa).

The ABC transporter domain occupies 5–246 (FELQGVQFAY…TALLRRARLL (242 aa)). 37 to 44 (GANGSGKS) is a binding site for ATP.

It belongs to the ABC transporter superfamily. As to quaternary structure, forms an energy-coupling factor (ECF) transporter complex composed of an ATP-binding protein (A component, NikO), a transmembrane protein (T component, NikQ) and a fused possible substrate-capture protein (S component, NikMN) of unknown stoichimetry.

The protein localises to the cell inner membrane. The catalysed reaction is Ni(2+)(out) + ATP + H2O = Ni(2+)(in) + ADP + phosphate + H(+). Functionally, part of the energy-coupling factor (ECF) transporter complex NikMNQO involved in nickel import. The complex confers nickel uptake upon expression in E.coli. Shows very low activity with cobalt. Presumably responsible for energy coupling to the transport system. The polypeptide is Nickel import ATP-binding protein NikO (Rhodobacter capsulatus (strain ATCC BAA-309 / NBRC 16581 / SB1003)).